The chain runs to 349 residues: DNA replication and repair protein RecF (349 aa).

30-37 contributes to the ATP binding site; it reads GKNGSGKT.

It belongs to the RecF family.

The protein localises to the cytoplasm. Functionally, the RecF protein is involved in DNA metabolism; it is required for DNA replication and normal SOS inducibility. RecF binds preferentially to single-stranded, linear DNA. It also seems to bind ATP. This Francisella tularensis subsp. holarctica (strain FTNF002-00 / FTA) protein is DNA replication and repair protein RecF.